Reading from the N-terminus, the 117-residue chain is UPF0321 protein PJ695.01c (117 aa).

The N-terminal stretch at 1–17 is a signal peptide; the sequence is MLLLLYICCLFLKFILA. Residues Asn-39, Asn-65, Asn-71, and Asn-104 are each glycosylated (N-linked (GlcNAc...) asparagine).

The protein belongs to the UPF0321 family.

The chain is UPF0321 protein PJ695.01c from Schizosaccharomyces pombe (strain 972 / ATCC 24843) (Fission yeast).